We begin with the raw amino-acid sequence, 444 residues long: 1,4-beta-D-glucan glucohydrolase (444 aa).

The Proton donor role is filled by Glu-164. Glu-349 serves as the catalytic Nucleophile.

Belongs to the glycosyl hydrolase 1 family. In terms of assembly, monomer.

The catalysed reaction is Hydrolysis of (1-&gt;4)-linkages in (1-&gt;4)-beta-D-glucans, to remove successive glucose units.. It catalyses the reaction Hydrolysis of terminal, non-reducing beta-D-glucosyl residues with release of beta-D-glucose.. The protein operates within glycan metabolism; cellulose degradation. It participates in glycan metabolism; beta-D-glucan degradation. Activated by glucose up to 200 mM when p-nitrophenyl-beta-glucoside is used as the substrate. This activation by end product concentrations may be due to a transglycosylation activity of the enzyme. Its function is as follows. Broad substrate specificity glycosidase. Releases glucose from soluble glucooligomers, with a preference for longer oligomers; acts more readily on cellotetraose than on cellobiose. Displays similar activities towards the disaccharides lactose and cellobiose. Is also able to hydrolyze various aryl-beta-glycosides in vitro. The chain is 1,4-beta-D-glucan glucohydrolase from Thermotoga neapolitana (strain ATCC 49049 / DSM 4359 / NBRC 107923 / NS-E).